Reading from the N-terminus, the 60-residue chain is Snake venom metalloproteinase bothrojaractivase (60 aa).

Residues 1 to 60 form the Peptidase M12B domain; it reads RYIELAVVADHGMFTKYRVHELVNTVNGFFRSKQDLIKVQKDKTLTSFGEWRERDLLPRI. Glu-4 provides a ligand contact to Ca(2+).

It belongs to the venom metalloproteinase (M12B) family. P-I subfamily. Monomer. Requires Zn(2+) as cofactor. In terms of tissue distribution, expressed by the venom gland.

It localises to the secreted. With respect to regulation, completely inhibited by EDTA and EGTA. Partially inhibited by serine proteinase inhibitors PMSF and benzamidine. Not inhibited by cysteine proteinase inhibitors mercury ions and E-64. Is active without cofactors, although the presence of low concentrations of calcium and zinc ions enhanced its ability to convert prothrombin (F2) into active thrombin. In terms of biological role, prothrombin (F2) activator that is cofactor-independent. Also has fibrinolytic and fibrinogenolytic activity. It degrades the Aalpha-chain and more slowly the Bbeta-chain of fibrin and fibrinogen, while the gamma-chain is only partially and slowly affected. A dose-dependent procoagulant activity is shown in human plasma. The sequence is that of Snake venom metalloproteinase bothrojaractivase from Bothrops jararaca (Jararaca).